An 884-amino-acid polypeptide reads, in one-letter code: Alanine--tRNA ligase (884 aa).

Histidine 562, histidine 566, cysteine 676, and histidine 680 together coordinate Zn(2+).

This sequence belongs to the class-II aminoacyl-tRNA synthetase family. Requires Zn(2+) as cofactor.

It is found in the cytoplasm. The catalysed reaction is tRNA(Ala) + L-alanine + ATP = L-alanyl-tRNA(Ala) + AMP + diphosphate. Its function is as follows. Catalyzes the attachment of alanine to tRNA(Ala) in a two-step reaction: alanine is first activated by ATP to form Ala-AMP and then transferred to the acceptor end of tRNA(Ala). Also edits incorrectly charged Ser-tRNA(Ala) and Gly-tRNA(Ala) via its editing domain. This is Alanine--tRNA ligase from Jannaschia sp. (strain CCS1).